Here is a 257-residue protein sequence, read N- to C-terminus: 5-oxoprolinase subunit A (257 aa).

This sequence belongs to the LamB/PxpA family. In terms of assembly, forms a complex composed of PxpA, PxpB and PxpC.

It catalyses the reaction 5-oxo-L-proline + ATP + 2 H2O = L-glutamate + ADP + phosphate + H(+). Its function is as follows. Catalyzes the cleavage of 5-oxoproline to form L-glutamate coupled to the hydrolysis of ATP to ADP and inorganic phosphate. The sequence is that of 5-oxoprolinase subunit A from Fusobacterium nucleatum subsp. nucleatum (strain ATCC 25586 / DSM 15643 / BCRC 10681 / CIP 101130 / JCM 8532 / KCTC 2640 / LMG 13131 / VPI 4355).